Reading from the N-terminus, the 1072-residue chain is Carbamoyl phosphate synthase large chain (1072 aa).

A carboxyphosphate synthetic domain region spans residues methionine 1–glutamate 401. 12 residues coordinate ATP: arginine 129, arginine 169, glycine 175, glycine 176, lysine 208, isoleucine 210, glutamate 215, glycine 241, valine 242, histidine 243, glutamine 284, and glutamate 298. The region spanning arginine 133 to valine 327 is the ATP-grasp 1 domain. Glutamine 284, glutamate 298, and asparagine 300 together coordinate Mg(2+). Mn(2+) is bound by residues glutamine 284, glutamate 298, and asparagine 300. Residues leucine 402–serine 546 form an oligomerization domain region. A carbamoyl phosphate synthetic domain region spans residues isoleucine 547–glycine 929. Residues glutamate 671–leucine 861 enclose the ATP-grasp 2 domain. Residues arginine 707, arginine 746, glutamate 752, glycine 777, valine 778, histidine 779, serine 780, glutamine 820, and glutamate 832 each coordinate ATP. Residues glutamine 820, glutamate 832, and asparagine 834 each coordinate Mg(2+). Mn(2+) is bound by residues glutamine 820, glutamate 832, and asparagine 834. Residues isoleucine 930–alanine 1072 form the MGS-like domain. Residues isoleucine 930–alanine 1072 form an allosteric domain region.

The protein belongs to the CarB family. As to quaternary structure, composed of two chains; the small (or glutamine) chain promotes the hydrolysis of glutamine to ammonia, which is used by the large (or ammonia) chain to synthesize carbamoyl phosphate. Tetramer of heterodimers (alpha,beta)4. The cofactor is Mg(2+). Mn(2+) is required as a cofactor.

The enzyme catalyses hydrogencarbonate + L-glutamine + 2 ATP + H2O = carbamoyl phosphate + L-glutamate + 2 ADP + phosphate + 2 H(+). It carries out the reaction hydrogencarbonate + NH4(+) + 2 ATP = carbamoyl phosphate + 2 ADP + phosphate + 2 H(+). It participates in amino-acid biosynthesis; L-arginine biosynthesis; carbamoyl phosphate from bicarbonate: step 1/1. The protein operates within pyrimidine metabolism; UMP biosynthesis via de novo pathway; (S)-dihydroorotate from bicarbonate: step 1/3. In terms of biological role, large subunit of the glutamine-dependent carbamoyl phosphate synthetase (CPSase). CPSase catalyzes the formation of carbamoyl phosphate from the ammonia moiety of glutamine, carbonate, and phosphate donated by ATP, constituting the first step of 2 biosynthetic pathways, one leading to arginine and/or urea and the other to pyrimidine nucleotides. The large subunit (synthetase) binds the substrates ammonia (free or transferred from glutamine from the small subunit), hydrogencarbonate and ATP and carries out an ATP-coupled ligase reaction, activating hydrogencarbonate by forming carboxy phosphate which reacts with ammonia to form carbamoyl phosphate. This is Carbamoyl phosphate synthase large chain from Bacillus cereus (strain B4264).